We begin with the raw amino-acid sequence, 176 residues long: Ribosome maturation factor RimM (176 aa).

In terms of domain architecture, PRC barrel spans 97 to 176 (GDEFYWRELV…TIQVDWDPSF (80 aa)).

It belongs to the RimM family. Binds ribosomal protein uS19.

It is found in the cytoplasm. In terms of biological role, an accessory protein needed during the final step in the assembly of 30S ribosomal subunit, possibly for assembly of the head region. Essential for efficient processing of 16S rRNA. May be needed both before and after RbfA during the maturation of 16S rRNA. It has affinity for free ribosomal 30S subunits but not for 70S ribosomes. In Pseudoalteromonas atlantica (strain T6c / ATCC BAA-1087), this protein is Ribosome maturation factor RimM.